The chain runs to 357 residues: Aurora kinase A- and ninein-interacting protein (357 aa).

Polar residues predominate over residues 72–93 (TSQQGKTNGADQRSVSSHTESQ). The segment at 72 to 102 (TSQQGKTNGADQRSVSSHTESQTNKESKEDA) is disordered. The tract at residues 189-357 (QKEGEDSSCE…EGNQVIRHQA (169 aa)) is interaction with AURKA. The interaction with RBBP8/CtIP stretch occupies residues 281–357 (KDSWSQLFTE…EGNQVIRHQA (77 aa)). Serine 292 carries the post-translational modification Phosphoserine.

This sequence belongs to the AUNIP family. In terms of assembly, interacts (via C-terminus) with AURKA (via C-terminus). Interacts (via N-terminus) with NIN; this interaction blocks NIN phosphorylation by both AURKA and GSK3B. Identified in a complex with NIN and AURKA. Interacts with RBBP8/CtIP.

The protein localises to the nucleus. It localises to the chromosome. The protein resides in the cytoplasm. It is found in the cytoskeleton. Its subcellular location is the microtubule organizing center. The protein localises to the centrosome. It localises to the spindle pole. In terms of biological role, DNA-binding protein that accumulates at DNA double-strand breaks (DSBs) following DNA damage and promotes DNA resection and homologous recombination. Serves as a sensor of DNA damage: binds DNA with a strong preference for DNA substrates that mimic structures generated at stalled replication forks, and anchors RBBP8/CtIP to DSB sites to promote DNA end resection and ensuing homologous recombination repair. Inhibits non-homologous end joining (NHEJ). Required for the dynamic movement of AURKA at the centrosomes and spindle apparatus during the cell cycle. The sequence is that of Aurora kinase A- and ninein-interacting protein from Bos taurus (Bovine).